A 142-amino-acid polypeptide reads, in one-letter code: Transcription antitermination protein NusB (142 aa).

This sequence belongs to the NusB family.

In terms of biological role, involved in transcription antitermination. Required for transcription of ribosomal RNA (rRNA) genes. Binds specifically to the boxA antiterminator sequence of the ribosomal RNA (rrn) operons. This chain is Transcription antitermination protein NusB, found in Persephonella marina (strain DSM 14350 / EX-H1).